A 138-amino-acid chain; its full sequence is Putative pre-16S rRNA nuclease (138 aa).

It belongs to the YqgF nuclease family.

The protein resides in the cytoplasm. In terms of biological role, could be a nuclease involved in processing of the 5'-end of pre-16S rRNA. This chain is Putative pre-16S rRNA nuclease, found in Shigella dysenteriae serotype 1 (strain Sd197).